A 168-amino-acid polypeptide reads, in one-letter code: MPRRPINKKRTLLPDPVYNSVSVHMLVNRVLKSGKKSVAYRIVYNALKEIGDVTQKNPVEVFEKALDNVTPRVEVKPRRRAGAIQMVPRVLRLGDRARANSLRWIMEACDKRSGQPMVTKLKSEILDAYKKTGFAIRKKEELHKIAIANAMYAKKPQVIINAINLLVD.

Belongs to the universal ribosomal protein uS7 family. Part of the 30S ribosomal subunit.

The protein resides in the plastid. It localises to the chloroplast. Functionally, one of the primary rRNA binding proteins, it binds directly to 16S rRNA where it nucleates assembly of the head domain of the 30S subunit. The polypeptide is Small ribosomal subunit protein uS7c (rps7) (Chlamydomonas reinhardtii (Chlamydomonas smithii)).